Consider the following 85-residue polypeptide: Kappa-theraphotoxin-Cg1d (85 aa).

A signal peptide spans 1-21 (MKVSVLITLAVLGVMFVWASA). Positions 22-51 (AELEERGSDQRDSPAWLKSMERIFQSEERE) are excised as a propeptide. Cystine bridges form between Cys-52–Cys-66, Cys-59–Cys-71, and Cys-65–Cys-78.

The protein belongs to the neurotoxin 10 (Hwtx-1) family. 28 (Jztx-11) subfamily. As to expression, expressed by the venom gland.

The protein localises to the secreted. Its function is as follows. Probable ion channel inhibitor. This Chilobrachys guangxiensis (Chinese earth tiger tarantula) protein is Kappa-theraphotoxin-Cg1d.